Consider the following 1104-residue polypeptide: Reverse gyrase (1104 aa).

The segment at 1-39 (MAVNSKYHHSCINCGGLNTDERNERGLPCEVCLPEDSPS) adopts an RG N-terminal-type zinc-finger fold. 4 residues coordinate Zn(2+): cysteine 11, cysteine 14, cysteine 29, and cysteine 32. Residues phenylalanine 75, aspartate 78, glutamine 83, glycine 103, glycine 105, lysine 106, threonine 107, and threonine 108 each contribute to the ADP site. Residues glutamine 83 and 100-107 (APTGVGKT) contribute to the ATP site. The region spanning 87 to 242 (AKRIVQGKSF…FSTIKQGKIY (156 aa)) is the Helicase ATP-binding domain. The DEAD box signature appears at 203-206 (DDVD). The interval 223–250 (GIPEEIIRKAFSTIKQGKIYERPKNLKP) is insert region. Positions 300-522 (KLVELLEIFR…EAEANWKELV (223 aa)) constitute a Helicase C-terminal domain. The interval 390–460 (RFSLELDKAP…KDEDLELIIP (71 aa)) is latch region. The tract at residues 538-1104 (DTSRSLLIIV…EEIKSLMEEG (567 aa)) is topoisomerase I. In terms of domain architecture, Toprim spans 542–699 (SLLIIVESPT…SLRRIEMHEI (158 aa)). Glutamate 548 contributes to the Mg(2+) binding site. The RG C-terminal-type zinc-finger motif lies at 618–645 (LKRCRDCGYQFTEDRDECPVCSSKNIDD). Residues cysteine 621, cysteine 624, cysteine 635, and cysteine 638 each coordinate Zn(2+). Aspartate 668 serves as a coordination point for Mg(2+). Positions 715-1101 (DFNLVKAQIV…LLYEEIKSLM (387 aa)) constitute a Topo IA-type catalytic domain. The active-site O-(5'-phospho-DNA)-tyrosine intermediate is tyrosine 851.

It in the N-terminal section; belongs to the DEAD box helicase family. DDVD subfamily. In the C-terminal section; belongs to the type IA topoisomerase family. Monomer. The cofactor is Zn(2+). It depends on Mg(2+) as a cofactor.

The protein resides in the cytoplasm. The catalysed reaction is ATP + H2O = ADP + phosphate + H(+). Functionally, modifies the topological state of DNA by introducing positive supercoils in an ATP-dependent process. Increases the linking number in steps of +1. Probably recognizes regions with a low GC content which melt and form a ssDNA bubble, allowing the enzyme to bind and cleave the DNA prior to strand passage; the bubble is probably cleaved by 2 reverse gyrase molecules, one on each strand. Positively supercoils DNA with all NTPS, although it strongly prefers ATP. In the presence of non-hydrolyzable ATP analogs it partially relaxes negative supercoils. Has an intrinsic ATPase activity that is stimulated by DNA; ssDNA is most effective. Binds to single-stranded DNA, transiently cleaves and then rejoins the ends, introducing a positive supercoil in the process. The scissile phosphodiester is attacked by the catalytic tyrosine of the enzyme, resulting in the formation of a DNA-(5'-phosphotyrosyl)-enzyme intermediate. The helicase-like domain is a nucleotide-dependent switch that alternates between a physically closed ATP-bound state with a slight preference for dsDNA, and an open ADP-bound state with a high preference for ssDNA. Whole enzyme has a very poor (k-unwind=0.001 sec(-1)) non-processive helicase activity in the 3'-5' direction that works on short substrates, while the isolated helicase domain has a slightly better helicase activity that works in both directions. Probably involved in rewinding DNA strands in regions of the chromosome that have opened up to allow replication, transcription, DNA repair and/or for DNA protection. The sequence is that of Reverse gyrase from Thermotoga maritima (strain ATCC 43589 / DSM 3109 / JCM 10099 / NBRC 100826 / MSB8).